The following is a 190-amino-acid chain: MPRLILASTSAYRRQLLSRLQLEFDTGRPEVDEQPQSGEAPSALASRLAAEKAAAVAVRLPGAWVIGSDQVADLDGQALGKPGTRAQAQAQLTAMSGRTVRFHTAVSLIGPERELHALDLTEVQLRALTPAEIERYLDAEPALDCAGSFKCEGLGISLFDAIRSQDPTALVGLPLIALARLLREAGFHLP.

Residue Asp-69 is the Proton acceptor of the active site.

The protein belongs to the Maf family. YceF subfamily. A divalent metal cation serves as cofactor.

Its subcellular location is the cytoplasm. It carries out the reaction N(7)-methyl-GTP + H2O = N(7)-methyl-GMP + diphosphate + H(+). Nucleoside triphosphate pyrophosphatase that hydrolyzes 7-methyl-GTP (m(7)GTP). May have a dual role in cell division arrest and in preventing the incorporation of modified nucleotides into cellular nucleic acids. This is 7-methyl-GTP pyrophosphatase from Xanthomonas oryzae pv. oryzae (strain MAFF 311018).